The sequence spans 473 residues: 1-deoxy-D-xylulose 5-phosphate reductoisomerase, chloroplastic (473 aa).

The N-terminal 49 residues, 1–49 (MALKVVSFPGDLAAVSFLDSNRGGAFNQLKVDLPFQTRDRRAVSLRRTC), are a transit peptide targeting the chloroplast. Residues Thr85, Gly86, Ser87, Ile88, Gly111, Asn113, and Asn199 each coordinate NADPH. A 1-deoxy-D-xylulose 5-phosphate-binding site is contributed by Lys200. Glu201 serves as a coordination point for NADPH. Asp225 is a binding site for Mn(2+). 4 residues coordinate 1-deoxy-D-xylulose 5-phosphate: Ser226, Glu227, Ser251, and His274. A Mn(2+)-binding site is contributed by Glu227. Gly280 lines the NADPH pocket. Positions 287, 292, 293, and 296 each coordinate 1-deoxy-D-xylulose 5-phosphate. Position 296 (Glu296) interacts with Mn(2+).

It belongs to the DXR family. The cofactor is Mn(2+). Mg(2+) serves as cofactor.

It is found in the plastid. The protein resides in the chloroplast stroma. The enzyme catalyses 2-C-methyl-D-erythritol 4-phosphate + NADP(+) = 1-deoxy-D-xylulose 5-phosphate + NADPH + H(+). It participates in isoprenoid biosynthesis; isopentenyl diphosphate biosynthesis via DXP pathway; isopentenyl diphosphate from 1-deoxy-D-xylulose 5-phosphate: step 1/6. In terms of biological role, enzyme of the plastid non-mevalonate pathway for isoprenoid biosynthesis that catalyzes the NADPH-dependent rearrangement and reduction of 1-deoxy-D-xylulose-5-phosphate (DXP) to 2-C-methyl-D-erythritol 4-phosphate (MEP). Required for chloroplast development. The polypeptide is 1-deoxy-D-xylulose 5-phosphate reductoisomerase, chloroplastic (DXR) (Oryza sativa subsp. japonica (Rice)).